The sequence spans 320 residues: Ferrochelatase (320 aa).

2 residues coordinate Fe cation: His194 and Glu275.

The protein belongs to the ferrochelatase family. As to quaternary structure, monomer.

The protein localises to the cytoplasm. The catalysed reaction is heme b + 2 H(+) = protoporphyrin IX + Fe(2+). Its pathway is porphyrin-containing compound metabolism; protoheme biosynthesis; protoheme from protoporphyrin-IX: step 1/1. Catalyzes the ferrous insertion into protoporphyrin IX. This Escherichia coli O157:H7 (strain EC4115 / EHEC) protein is Ferrochelatase.